Consider the following 307-residue polypeptide: Agmatinase (307 aa).

Positions 128, 151, 153, 155, 232, and 234 each coordinate Mn(2+).

It belongs to the arginase family. Agmatinase subfamily. It depends on Mn(2+) as a cofactor.

It catalyses the reaction agmatine + H2O = urea + putrescine. It participates in amine and polyamine biosynthesis; putrescine biosynthesis via agmatine pathway; putrescine from agmatine: step 1/1. In terms of biological role, catalyzes the formation of putrescine from agmatine. This Photorhabdus laumondii subsp. laumondii (strain DSM 15139 / CIP 105565 / TT01) (Photorhabdus luminescens subsp. laumondii) protein is Agmatinase.